Consider the following 305-residue polypeptide: Tyrosine recombinase XerC (305 aa).

One can recognise a Core-binding (CB) domain in the interval 1–93 (MVLDGFAAHF…SWRQYCVWLV (93 aa)). Residues 114–294 (RVPKALPQEW…DFDHIARLYD (181 aa)) enclose the Tyr recombinase domain. Residues arginine 155, lysine 179, histidine 246, arginine 249, and histidine 272 contribute to the active site. Tyrosine 281 serves as the catalytic O-(3'-phospho-DNA)-tyrosine intermediate.

It belongs to the 'phage' integrase family. XerC subfamily. Forms a cyclic heterotetrameric complex composed of two molecules of XerC and two molecules of XerD.

The protein resides in the cytoplasm. Site-specific tyrosine recombinase, which acts by catalyzing the cutting and rejoining of the recombining DNA molecules. The XerC-XerD complex is essential to convert dimers of the bacterial chromosome into monomers to permit their segregation at cell division. It also contributes to the segregational stability of plasmids. The polypeptide is Tyrosine recombinase XerC (Neisseria meningitidis serogroup C / serotype 2a (strain ATCC 700532 / DSM 15464 / FAM18)).